A 724-amino-acid polypeptide reads, in one-letter code: NAD(+) hydrolase SARM1 (724 aa).

A mitochondrion-targeting transit peptide spans 1–27; it reads MVLTLLLSAYKLCRFFAMSGPRPGAER. The ARM 1 repeat unit spans residues 60–100; it reads EVQDALERALPELQQALSALKQAGGARAVGAGLAEVFQLVE. Residues Trp-103, Arg-110, 149-157, and 190-193 each bind NAD(+); these read EQILVAENR and HMFK. 7 ARM repeats span residues 114 to 153, 155 to 193, 196 to 235, 237 to 280, 281 to 314, 315 to 354, and 359 to 402; these read QGLC…QILV, ENRD…HMFK, EETC…NCAL, GGQA…LATN, KEVE…CLVD, ASDT…AEAA, and QGKT…EEVP. SAM domains follow at residues 412 to 476 and 486 to 548; these read WKEA…LKTF and NLAD…MLHS. Phosphoserine is present on residues Ser-548 and Ser-558. Residues 560–703 form the TIR domain; that stretch reads DTPDVFISYR…KIIRFLQGRS (144 aa). NAD(+) contacts are provided by residues 569–570 and Glu-599; that span reads RR. Glu-642 is a catalytic residue. The interval 704-724 is disordered; it reads SRDSSAGSDTSLEGAAPMGPT.

Belongs to the SARM1 family. Homooctamer; forms an octameric ring via SAM domains. Interacts with TICAM1/TRIF and thereby interferes with TICAM1/TRIF function. Interacts with MAPK10/JNK3 and SDC2 (via cytoplasmic domain). Post-translationally, phosphorylation at Ser-548 by JNK kinases (MAPK8, MAPK9 and /or MAPK10) enhance the NAD(+) hydrolase (NADase) activity. Phosphorylation at Ser-548 and subsequent activation takes place in response to oxidative stress conditions and inhibits mitochondrial respiration. As to expression, predominantly expressed in brain, kidney and liver. Expressed at lower level in placenta.

It is found in the cytoplasm. The protein resides in the cell projection. The protein localises to the axon. It localises to the dendrite. Its subcellular location is the synapse. It is found in the mitochondrion. The enzyme catalyses NAD(+) + H2O = ADP-D-ribose + nicotinamide + H(+). The catalysed reaction is NAD(+) = cyclic ADP-beta-D-ribose + nicotinamide + H(+). It carries out the reaction NADP(+) + H2O = ADP-D-ribose 2'-phosphate + nicotinamide + H(+). Its activity is regulated as follows. Autoinhibited: in the inactive state, the enzymatic TIR domain is held apart by the autoinhibiting ARM repeats. NAD(+)-binding to ARM repeats maintains an inactive state by promoting interaction between ARM repeats and the TIR domain, thereby facilitating inhibition of the enzymatic TIR domain. Following activation, possibly by nicotinamide mononucleotide (NMN), auto-inhibitory interactions are released, allowing self-association of the TIR domains and subsequent activation of the NAD(+) hydrolase (NADase) activity. Self-association of TIR domains is facilitated by the octamer of SAM domains. NAD(+) hydrolase activity is inhibited by nicotinamide. Specifically inhibited by berberine chloride and zinc chloride. Its function is as follows. NAD(+) hydrolase, which plays a key role in axonal degeneration following injury by regulating NAD(+) metabolism. Acts as a negative regulator of MYD88- and TRIF-dependent toll-like receptor signaling pathway by promoting Wallerian degeneration, an injury-induced form of programmed subcellular death which involves degeneration of an axon distal to the injury site. Wallerian degeneration is triggered by NAD(+) depletion: in response to injury, SARM1 is activated and catalyzes cleavage of NAD(+) into ADP-D-ribose (ADPR), cyclic ADPR (cADPR) and nicotinamide; NAD(+) cleavage promoting cytoskeletal degradation and axon destruction. Also able to hydrolyze NADP(+), but not other NAD(+)-related molecules. Can activate neuronal cell death in response to stress. Regulates dendritic arborization through the MAPK4-JNK pathway. Involved in innate immune response: inhibits both TICAM1/TRIF- and MYD88-dependent activation of JUN/AP-1, TRIF-dependent activation of NF-kappa-B and IRF3, and the phosphorylation of MAPK14/p38. The protein is NAD(+) hydrolase SARM1 of Homo sapiens (Human).